Here is a 513-residue protein sequence, read N- to C-terminus: ATP synthase subunit alpha (513 aa).

ATP is bound at residue Gly169–Thr176.

This sequence belongs to the ATPase alpha/beta chains family. As to quaternary structure, F-type ATPases have 2 components, CF(1) - the catalytic core - and CF(0) - the membrane proton channel. CF(1) has five subunits: alpha(3), beta(3), gamma(1), delta(1), epsilon(1). CF(0) has three main subunits: a(1), b(2) and c(9-12). The alpha and beta chains form an alternating ring which encloses part of the gamma chain. CF(1) is attached to CF(0) by a central stalk formed by the gamma and epsilon chains, while a peripheral stalk is formed by the delta and b chains.

The protein localises to the cell inner membrane. It catalyses the reaction ATP + H2O + 4 H(+)(in) = ADP + phosphate + 5 H(+)(out). Functionally, produces ATP from ADP in the presence of a proton gradient across the membrane. The alpha chain is a regulatory subunit. The sequence is that of ATP synthase subunit alpha from Pasteurella multocida (strain Pm70).